A 213-amino-acid polypeptide reads, in one-letter code: 3-isopropylmalate dehydratase small subunit (213 aa).

It belongs to the LeuD family. LeuD type 1 subfamily. In terms of assembly, heterodimer of LeuC and LeuD.

The enzyme catalyses (2R,3S)-3-isopropylmalate = (2S)-2-isopropylmalate. The protein operates within amino-acid biosynthesis; L-leucine biosynthesis; L-leucine from 3-methyl-2-oxobutanoate: step 2/4. Catalyzes the isomerization between 2-isopropylmalate and 3-isopropylmalate, via the formation of 2-isopropylmaleate. This is 3-isopropylmalate dehydratase small subunit from Neisseria meningitidis serogroup C / serotype 2a (strain ATCC 700532 / DSM 15464 / FAM18).